Here is a 1832-residue protein sequence, read N- to C-terminus: COPII coat assembly protein sec16 (1832 aa).

7 disordered regions span residues 1–163, 183–209, 240–269, 345–863, 1420–1482, 1509–1679, and 1692–1832; these read MAQP…NDAQ, GATV…RDNE, LGQG…EDDE, QAEL…APVP, PATG…HGMP, EDSA…LGEE, and VNKK…VMAK. The span at 57–74 shows a compositional bias: polar residues; it reads ENGSIESKTAISADTSDQ. The segment covering 91 to 118 has biased composition (basic and acidic residues); it reads SKPDTEEPDKPSRDESIFMQTDKSRAVE. A compositionally biased stretch (polar residues) spans 123 to 133; that stretch reads NVPTENGNVDI. The segment covering 137–151 has biased composition (basic and acidic residues); sequence LEEHVAEEPHYEGPE. Composition is skewed to acidic residues over residues 257–269, 348–361, and 369–383; these read QVDD…EDDE, LSDD…TEDD, and ELDD…DDDT. Over residues 422 to 457 the composition is skewed to polar residues; it reads VSYTPHQPSTSDLLSGIPAQNTAAQPTNASMSSYFS. Over residues 471–480 the composition is skewed to basic and acidic residues; that stretch reads SFAERSKEGY. Positions 510-524 are enriched in pro residues; sequence VPKPPPRSSSIPAPP. 2 stretches are compositionally biased toward polar residues: residues 528–546 and 590–603; these read STVS…TAPQ and NQYS…QSNI. The span at 622–636 shows a compositional bias: low complexity; the sequence is NLLAPNVPSAPAVPS. Over residues 653-665 the composition is skewed to pro residues; that stretch reads KPPPSPRYSPAPP. Positions 679–688 are enriched in polar residues; the sequence is YASQPASISG. Over residues 705 to 721 the composition is skewed to basic and acidic residues; sequence YHEKIHYEDQGQSEERP. Over residues 738–747 the composition is skewed to polar residues; the sequence is SEQPVSSENK. Positions 814 to 829 are enriched in low complexity; the sequence is PRRSQTQSPSQTLSPR. Composition is skewed to polar residues over residues 845–854, 1428–1439, 1513–1538, and 1550–1559; these read HGSTSPTRTV, QPVSQYAPSASP, SGAQ…SSTY, and QAVSTTSQPD. Composition is skewed to basic and acidic residues over residues 1594–1603 and 1620–1644; these read EDKPKKKSIM and KAER…DAKK. A compositionally biased stretch (pro residues) spans 1725–1736; sequence GPPPAMATPPPT. Residues 1737-1756 show a composition bias toward low complexity; sequence GASGSRPSSSAGAPTSVSAS. Pro residues predominate over residues 1757–1769; sequence PAPPSLGAPPPAI.

It belongs to the SEC16 family.

It is found in the endoplasmic reticulum membrane. In terms of biological role, involved in the initiation of assembly of the COPII coat required for the formation of transport vesicles from the endoplasmic reticulum (ER) and the selection of cargo molecules. Also involved in autophagy. In Aspergillus fumigatus (strain ATCC MYA-4609 / CBS 101355 / FGSC A1100 / Af293) (Neosartorya fumigata), this protein is COPII coat assembly protein sec16 (sec16).